Reading from the N-terminus, the 114-residue chain is Chaperonin GroEL (114 aa).

22–26 is a binding site for ATP; that stretch reads DGTTT.

It belongs to the chaperonin (HSP60) family. In terms of assembly, forms a cylinder of 14 subunits composed of two heptameric rings stacked back-to-back. Interacts with the co-chaperonin GroES.

It is found in the cytoplasm. It carries out the reaction ATP + H2O + a folded polypeptide = ADP + phosphate + an unfolded polypeptide.. Functionally, together with its co-chaperonin GroES, plays an essential role in assisting protein folding. The GroEL-GroES system forms a nano-cage that allows encapsulation of the non-native substrate proteins and provides a physical environment optimized to promote and accelerate protein folding. This Mycobacterium ulcerans protein is Chaperonin GroEL.